Here is a 139-residue protein sequence, read N- to C-terminus: MILLDTNVISEPLRPQPNERVVAWLDSLILEDVYLSAITVAELRLGVALLLNGKKKNVLHERLEQSILPLFAGRILPFDEPVAAIYAQIRSYAKTHGKEIAAADGYIAATAKQHSLTVATRDTGSFFAADVAVFNPWHD.

One can recognise a PINc domain in the interval 2–123 (ILLDTNVISE…HSLTVATRDT (122 aa)). Positions 5 and 104 each coordinate Mg(2+).

The protein belongs to the PINc/VapC protein family. Forms a heterodimer with FitA, 4 FitAB heterodimers form a complex that binds to promoter DNA. The complex is also seen in solution. This protein does not actually contact DNA. Requires Mg(2+) as cofactor.

Its function is as follows. Toxic component of a type II toxin-antitoxin (TA) system. Plays a role in the speed with which bacteria traverse human epithelial cells; disruption of the locus increases the speed of trafficking about 2-4-fold. FitAB binds to its own promoter better than FitA alone. The expected nuclease activity was not observed for the FitAB complex, perhaps because FitA (the antitoxin) prevents metal binding and thus catalysis by FitB. In Neisseria gonorrhoeae (strain ATCC 700825 / FA 1090), this protein is Toxin FitB (fitB).